The primary structure comprises 218 residues: Large ribosomal subunit protein uL3 (218 aa).

Positions 126 to 170 (HGFSRGPMSHGSKNHREPGSTGAGTTPGRIYPGKRMAGRYGGKKR) are disordered.

This sequence belongs to the universal ribosomal protein uL3 family. In terms of assembly, part of the 50S ribosomal subunit. Forms a cluster with proteins L14 and L19.

One of the primary rRNA binding proteins, it binds directly near the 3'-end of the 23S rRNA, where it nucleates assembly of the 50S subunit. The sequence is that of Large ribosomal subunit protein uL3 from Prochlorococcus marinus (strain MIT 9313).